Consider the following 985-residue polypeptide: Translation initiation factor IF-2 (985 aa).

Composition is skewed to basic and acidic residues over residues 49–58 (QYGKKQEKSS), 65–89 (IQRE…RPDN), and 99–113 (VPNR…DKAK). Residues 49–401 (QYGKKQEKSS…QQSAPPPILD (353 aa)) are disordered. Positions 125 to 136 (SKTTTNSENEQT) are enriched in polar residues. The span at 137-162 (APRQGSAQQSGQGRPQANRPQGSQGR) shows a compositional bias: low complexity. Gly residues-rich tracts occupy residues 180–246 (PQGG…GQGR) and 288–324 (PQGG…GAGR). A compositionally biased stretch (basic and acidic residues) spans 349-377 (KAPDKTKGDRRKNYEKDGKWADGQIEKNK). Positions 378–391 (LFKGRNNKNKKRQH) are enriched in basic residues. Residues 485 to 654 (LRPPVVTIMG…LLVAEVHELK (170 aa)) enclose the tr-type G domain. The G1 stretch occupies residues 494-501 (GHVDHGKT). Residue 494 to 501 (GHVDHGKT) participates in GTP binding. Positions 519–523 (GITQH) are G2. Residues 540 to 543 (DTPG) form a G3 region. GTP-binding positions include 540 to 544 (DTPGH) and 594 to 597 (NKMD). The segment at 594-597 (NKMD) is G4. The tract at residues 630-632 (SAK) is G5.

The protein belongs to the TRAFAC class translation factor GTPase superfamily. Classic translation factor GTPase family. IF-2 subfamily.

It is found in the cytoplasm. In terms of biological role, one of the essential components for the initiation of protein synthesis. Protects formylmethionyl-tRNA from spontaneous hydrolysis and promotes its binding to the 30S ribosomal subunits. Also involved in the hydrolysis of GTP during the formation of the 70S ribosomal complex. This Desulforamulus reducens (strain ATCC BAA-1160 / DSM 100696 / MI-1) (Desulfotomaculum reducens) protein is Translation initiation factor IF-2.